The sequence spans 151 residues: UPF0178 protein YaiI (151 aa).

This sequence belongs to the UPF0178 family.

The chain is UPF0178 protein YaiI from Salmonella enteritidis PT4 (strain P125109).